A 425-amino-acid polypeptide reads, in one-letter code: Decarboxylase flvG (425 aa).

Lys82 is subject to N6-(pyridoxal phosphate)lysine. Pyridoxal 5'-phosphate contacts are provided by residues Ser213, Gly250, and 281–284; that span reads EPGR. A substrate-binding site is contributed by 331-332; it reads FE. Residue Cys365 is the Proton donor; shared with dimeric partner of the active site. Asp366 contributes to the substrate binding site. Pyridoxal 5'-phosphate is bound at residue Tyr395.

Belongs to the Orn/Lys/Arg decarboxylase class-II family. As to quaternary structure, homodimer. Only the dimer is catalytically active, as the active sites are constructed of residues from both monomers. The cofactor is pyridoxal 5'-phosphate.

The protein localises to the cytoplasm. It carries out the reaction N(6),N(6)-dimethyl-L-lysine + H(+) = N,N-dimethyl-cadaverine + CO2. It functions in the pathway secondary metabolite biosynthesis; terpenoid biosynthesis. Its function is as follows. Decarboxylase; part of the gene cluster that mediates the biosynthesis of flavunoidine, an alkaloidal terpenoid with a tetracyclic cage-like core connected to dimethylcadaverine via a C-N bond and acylated with 5,5-dimethyl-L-pipecolate. The tetracyclic core is synthesized by the terpene cyclase flvE and the cytochrome P450 monooxygenase flvD. The terpene cyclase flvE catalyzes the cyclization of farnesyl pyrophosphate (FPP) to form (1R,4R,5S)-(+)-acoradiene and the cytochrome P450 monooxygenase flvD is then responsible for oxidative conversion of (1R,4R,5S)-(+)-acoradiene into the tetracyclic cage present in the final product flavunoidine. In parallel, the N-methyltransferase flvH dimethylates L-lysine to give N,N-dimethyl-L-Lysin which is decarboxylated by flvG to afford dimethylcadaverine. The terpene cyclase-like protein flvF is the enzyme that attaches the dimethylcadaverine precusor at the C-7 of the tetracyclic cage to yield pre-flavunoidine. The cytochrome monooxygenase flvC hydroxylates the C-10 position of pre-flavunoidine whereas the NRPS flvI acylates the terpenoid core at the hydroxylated C-10 with dimethylpipecolate to yield final flavunoidine. The bifunctional enzyme flvA and the dehydrogenase flvB are responsible for the synthesis of the dimethylpipecolate precursor. The PLP-dependent lyase domain of flvA might use L-O-acetyl-homoserine and alpha-keto-isovalerate to form an intermediary ketone that can cyclize intramolecularly to yield an imine. The imine can be reduced by flvB to yield the 6-carboxylated pipecolate. The C-terminal alpha-KG-dependent oxygenase domain of flvA is then proposed to catalyze the decarboxylation to yield dimethylpipecolate. This chain is Decarboxylase flvG, found in Aspergillus flavus (strain ATCC 200026 / FGSC A1120 / IAM 13836 / NRRL 3357 / JCM 12722 / SRRC 167).